The primary structure comprises 137 residues: Large ribosomal subunit protein uL16 (137 aa).

The protein belongs to the universal ribosomal protein uL16 family. In terms of assembly, part of the 50S ribosomal subunit.

Its function is as follows. Binds 23S rRNA and is also seen to make contacts with the A and possibly P site tRNAs. This chain is Large ribosomal subunit protein uL16, found in Methylococcus capsulatus (strain ATCC 33009 / NCIMB 11132 / Bath).